A 185-amino-acid polypeptide reads, in one-letter code: uncharacterized protein (185 aa).

Belongs to the PIGL family.

This is an uncharacterized protein from Escherichia coli (strain K12).